Reading from the N-terminus, the 213-residue chain is Large ribosomal subunit protein uL1 (213 aa).

This sequence belongs to the universal ribosomal protein uL1 family. As to quaternary structure, part of the 50S ribosomal subunit.

Its function is as follows. Probably involved in E site tRNA release. Binds directly to 23S rRNA. Functionally, protein L1 is also a translational repressor protein, it controls the translation of its operon by binding to its mRNA. The sequence is that of Large ribosomal subunit protein uL1 from Methanothermococcus thermolithotrophicus (Methanococcus thermolithotrophicus).